The primary structure comprises 99 residues: Protein RnfH (99 aa).

Belongs to the UPF0125 (RnfH) family.

The polypeptide is Protein RnfH (Tolumonas auensis (strain DSM 9187 / NBRC 110442 / TA 4)).